The sequence spans 228 residues: Cytidylate kinase (228 aa).

17 to 25 (GPTASGKGT) is a binding site for ATP.

Belongs to the cytidylate kinase family. Type 1 subfamily.

It is found in the cytoplasm. It carries out the reaction CMP + ATP = CDP + ADP. The enzyme catalyses dCMP + ATP = dCDP + ADP. This Burkholderia pseudomallei (strain 1106a) protein is Cytidylate kinase.